The sequence spans 100 residues: Small ribosomal subunit protein uS14c (100 aa).

The protein belongs to the universal ribosomal protein uS14 family. As to quaternary structure, part of the 30S ribosomal subunit.

It localises to the plastid. It is found in the chloroplast. Binds 16S rRNA, required for the assembly of 30S particles. This is Small ribosomal subunit protein uS14c from Oedogonium cardiacum (Filamentous green alga).